Reading from the N-terminus, the 282-residue chain is Shikimate dehydrogenase (NADP(+)) (282 aa).

Residues 15 to 17 (SKS) and Thr62 contribute to the shikimate site. Catalysis depends on Lys66, which acts as the Proton acceptor. 2 residues coordinate shikimate: Asn87 and Asp103. NADP(+)-binding positions include 127 to 131 (GAGGA), 151 to 156 (NRTHTK), and Met220. Tyr222 provides a ligand contact to shikimate. Gly244 is a binding site for NADP(+).

The protein belongs to the shikimate dehydrogenase family. Homodimer.

The catalysed reaction is shikimate + NADP(+) = 3-dehydroshikimate + NADPH + H(+). It functions in the pathway metabolic intermediate biosynthesis; chorismate biosynthesis; chorismate from D-erythrose 4-phosphate and phosphoenolpyruvate: step 4/7. In terms of biological role, involved in the biosynthesis of the chorismate, which leads to the biosynthesis of aromatic amino acids. Catalyzes the reversible NADPH linked reduction of 3-dehydroshikimate (DHSA) to yield shikimate (SA). The sequence is that of Shikimate dehydrogenase (NADP(+)) from Shewanella baltica (strain OS195).